The chain runs to 367 residues: Probable butyrate kinase (367 aa).

This sequence belongs to the acetokinase family.

It is found in the cytoplasm. The catalysed reaction is butanoate + ATP = butanoyl phosphate + ADP. The chain is Probable butyrate kinase from Bacillus cereus (strain G9842).